A 275-amino-acid polypeptide reads, in one-letter code: Light-independent protochlorophyllide reductase iron-sulfur ATP-binding protein (275 aa).

ATP contacts are provided by residues 12-17 (GIGKST) and Lys-41. Ser-16 serves as a coordination point for Mg(2+). Residues Cys-97 and Cys-131 each contribute to the [4Fe-4S] cluster site. 182-183 (NR) contacts ATP.

The protein belongs to the NifH/BchL/ChlL family. In terms of assembly, homodimer. Protochlorophyllide reductase is composed of three subunits; BchL, BchN and BchB. The cofactor is [4Fe-4S] cluster.

It carries out the reaction chlorophyllide a + oxidized 2[4Fe-4S]-[ferredoxin] + 2 ADP + 2 phosphate = protochlorophyllide a + reduced 2[4Fe-4S]-[ferredoxin] + 2 ATP + 2 H2O. It participates in porphyrin-containing compound metabolism; bacteriochlorophyll biosynthesis (light-independent). In terms of biological role, component of the dark-operative protochlorophyllide reductase (DPOR) that uses Mg-ATP and reduced ferredoxin to reduce ring D of protochlorophyllide (Pchlide) to form chlorophyllide a (Chlide). This reaction is light-independent. The L component serves as a unique electron donor to the NB-component of the complex, and binds Mg-ATP. In Chlorobium phaeobacteroides (strain BS1), this protein is Light-independent protochlorophyllide reductase iron-sulfur ATP-binding protein.